Consider the following 333-residue polypeptide: Protoheme IX farnesyltransferase (333 aa).

Transmembrane regions (helical) follow at residues 36–56 (LIPL…GWPL), 61–81 (LVCT…LNCL), 107–127 (AAFA…VSGV), 130–150 (LAAG…TALL), 158–178 (IVIG…AATG), 186–206 (WLFA…ALLL), 243–263 (FLGV…LLPF), and 284–304 (AKGL…LLVF).

This sequence belongs to the UbiA prenyltransferase family. Protoheme IX farnesyltransferase subfamily.

It is found in the cell inner membrane. It catalyses the reaction heme b + (2E,6E)-farnesyl diphosphate + H2O = Fe(II)-heme o + diphosphate. It functions in the pathway porphyrin-containing compound metabolism; heme O biosynthesis; heme O from protoheme: step 1/1. Its function is as follows. Converts heme B (protoheme IX) to heme O by substitution of the vinyl group on carbon 2 of heme B porphyrin ring with a hydroxyethyl farnesyl side group. The chain is Protoheme IX farnesyltransferase from Synechococcus sp. (strain WH7803).